Here is a 283-residue protein sequence, read N- to C-terminus: Phosphatidylserine decarboxylase proenzyme (283 aa).

Residues Asp90, His143, and Ser248 each act as charge relay system; for autoendoproteolytic cleavage activity in the active site. Residue Ser248 is the Schiff-base intermediate with substrate; via pyruvic acid; for decarboxylase activity of the active site. Ser248 is modified (pyruvic acid (Ser); by autocatalysis).

It belongs to the phosphatidylserine decarboxylase family. PSD-B subfamily. Prokaryotic type I sub-subfamily. In terms of assembly, heterodimer of a large membrane-associated beta subunit and a small pyruvoyl-containing alpha subunit. It depends on pyruvate as a cofactor. Is synthesized initially as an inactive proenzyme. Formation of the active enzyme involves a self-maturation process in which the active site pyruvoyl group is generated from an internal serine residue via an autocatalytic post-translational modification. Two non-identical subunits are generated from the proenzyme in this reaction, and the pyruvate is formed at the N-terminus of the alpha chain, which is derived from the carboxyl end of the proenzyme. The autoendoproteolytic cleavage occurs by a canonical serine protease mechanism, in which the side chain hydroxyl group of the serine supplies its oxygen atom to form the C-terminus of the beta chain, while the remainder of the serine residue undergoes an oxidative deamination to produce ammonia and the pyruvoyl prosthetic group on the alpha chain. During this reaction, the Ser that is part of the protease active site of the proenzyme becomes the pyruvoyl prosthetic group, which constitutes an essential element of the active site of the mature decarboxylase.

The protein resides in the cell membrane. The catalysed reaction is a 1,2-diacyl-sn-glycero-3-phospho-L-serine + H(+) = a 1,2-diacyl-sn-glycero-3-phosphoethanolamine + CO2. It functions in the pathway phospholipid metabolism; phosphatidylethanolamine biosynthesis; phosphatidylethanolamine from CDP-diacylglycerol: step 2/2. In terms of biological role, catalyzes the formation of phosphatidylethanolamine (PtdEtn) from phosphatidylserine (PtdSer). This Francisella tularensis subsp. novicida (strain U112) protein is Phosphatidylserine decarboxylase proenzyme.